We begin with the raw amino-acid sequence, 393 residues long: tRNA (guanine-N(7)-)-methyltransferase (393 aa).

3 residues coordinate S-adenosyl-L-methionine: Glu124, Glu149, and Asp176. Asp232 contributes to the substrate binding site.

The protein belongs to the class I-like SAM-binding methyltransferase superfamily. TrmB family.

The enzyme catalyses guanosine(46) in tRNA + S-adenosyl-L-methionine = N(7)-methylguanosine(46) in tRNA + S-adenosyl-L-homocysteine. The protein operates within tRNA modification; N(7)-methylguanine-tRNA biosynthesis. Catalyzes the formation of N(7)-methylguanine at position 46 (m7G46) in tRNA. In Helicobacter pylori (strain HPAG1), this protein is tRNA (guanine-N(7)-)-methyltransferase.